The primary structure comprises 177 residues: Large ribosomal subunit protein uL5 (177 aa).

The protein belongs to the universal ribosomal protein uL5 family. As to quaternary structure, part of the 50S ribosomal subunit. Interacts with protein L18 and the 5S rRNA, and probably with tRNAs. Forms a bridge to the 30S subunit in the 70S ribosome.

In terms of biological role, this is 1 of 5 proteins that mediates the attachment of the 5S rRNA onto the large ribosomal subunit, stabilizing the orientation of adjacent RNA domains. Forms part of the central protuberance. Modeling places the A and P site tRNAs in close proximity to this protein; the 5S rRNA and some of its associated proteins might help stabilize positioning of ribosome-bound tRNAs. In the 70S ribosome it is thought to contact protein S13 of the 30S subunit (bridge B1b), connecting the 2 subunits; this bridge is implicated in subunit movement. This chain is Large ribosomal subunit protein uL5 (rpl5), found in Haloarcula marismortui (strain ATCC 43049 / DSM 3752 / JCM 8966 / VKM B-1809) (Halobacterium marismortui).